The sequence spans 469 residues: 24-hydroxycholesterol 7-alpha-hydroxylase (469 aa).

The first 23 residues, Met1–Arg23, serve as a signal peptide directing secretion. Helical transmembrane passes span Gly267–Ala287, Val352–Leu372, and Phe412–Leu432. Cys414 provides a ligand contact to heme.

It belongs to the cytochrome P450 family. The cofactor is heme. In terms of tissue distribution, liver specific.

It localises to the endoplasmic reticulum membrane. Its subcellular location is the microsome membrane. The catalysed reaction is (24S)-hydroxycholesterol + reduced [NADPH--hemoprotein reductase] + O2 = (24S)-7alpha-dihydroxycholesterol + oxidized [NADPH--hemoprotein reductase] + H2O + H(+). It participates in steroid metabolism; cholesterol degradation. Its pathway is lipid metabolism; bile acid biosynthesis. Its function is as follows. A cytochrome P450 monooxygenase involved in neural cholesterol clearance through bile acid synthesis. Catalyzes 7-alpha hydroxylation of (24S)-hydroxycholesterol, a neural oxysterol that is metabolized to bile acids in the liver. Mechanistically, uses molecular oxygen inserting one oxygen atom into a substrate, and reducing the second into a water molecule, with two electrons provided by NADPH via cytochrome P450 reductase (CPR; NADPH-ferrihemoprotein reductase). This chain is 24-hydroxycholesterol 7-alpha-hydroxylase, found in Homo sapiens (Human).